A 41-amino-acid chain; its full sequence is MKCSLLLVVFAAMVALFAAGTNAAMNQRKMLEVIGGLKKEK.

A signal peptide spans 1-23 (MKCSLLLVVFAAMVALFAAGTNA).

The protein belongs to the caterpillar 4 family. Expressed by the venom apparatus.

It is found in the secreted. Probable toxin. The chain is U-megalopygitoxin(4)-Mo5 from Megalopyge opercularis (Southern flannel moth).